Reading from the N-terminus, the 441-residue chain is Probable pyridine nucleotide-disulfide oxidoreductase RclA (441 aa).

33–43 (EQSNAMYGGTC) lines the FAD pocket. A disulfide bridge links Cys-43 with Cys-48. His-426 functions as the Proton acceptor in the catalytic mechanism.

It belongs to the class-I pyridine nucleotide-disulfide oxidoreductase family. FAD is required as a cofactor.

In terms of biological role, probably involved in reactive chlorine species (RCS) stress resistance. This Escherichia coli (strain K12) protein is Probable pyridine nucleotide-disulfide oxidoreductase RclA (rclA).